The primary structure comprises 577 residues: Endopolyphosphatase (577 aa).

Residues 1–2 (MR) are Cytoplasmic-facing. Residues 3 to 23 (PSVITVAVLFVQSTWASFAFG) traverse the membrane as a helical; Signal-anchor for type II membrane protein segment. Residues 24–577 (NPMSMRNKAH…YIGSISDFED (554 aa)) lie on the Vacuolar side of the membrane. Residues Asn-363, Asn-370, Asn-375, and Asn-399 are each glycosylated (N-linked (GlcNAc...) asparagine). The interval 430 to 460 (SDYEIDKKKKKKKKNNKKKKKNKRKNIKPGP) is disordered. A compositionally biased stretch (basic residues) spans 437–456 (KKKKKKKNNKKKKKNKRKNI). An N-linked (GlcNAc...) asparagine glycan is attached at Asn-481.

It belongs to the endopolyphosphatase PPN1 family. The cofactor is a divalent metal cation. Processing by proteases in the vacuole may be required for activation.

It localises to the vacuole membrane. It carries out the reaction [phosphate](n+1) + n H2O = (n+1) phosphate + n H(+). Functionally, catalyzes the hydrolysis of inorganic polyphosphate (polyP) chains of many hundreds of phosphate residues into shorter lengths. The polypeptide is Endopolyphosphatase (ppn1) (Schizosaccharomyces pombe (strain 972 / ATCC 24843) (Fission yeast)).